The chain runs to 983 residues: Bifunctional glutamine synthetase adenylyltransferase/adenylyl-removing enzyme (983 aa).

Residues 1 to 468 (MTVENAKALF…KQYAALFAQA (468 aa)) form an adenylyl removase region. Residues 473-983 (AASGNLVFTG…FDKLVGHGAD (511 aa)) are adenylyl transferase.

The protein belongs to the GlnE family. It depends on Mg(2+) as a cofactor.

It carries out the reaction [glutamine synthetase]-O(4)-(5'-adenylyl)-L-tyrosine + phosphate = [glutamine synthetase]-L-tyrosine + ADP. It catalyses the reaction [glutamine synthetase]-L-tyrosine + ATP = [glutamine synthetase]-O(4)-(5'-adenylyl)-L-tyrosine + diphosphate. Its function is as follows. Involved in the regulation of glutamine synthetase GlnA, a key enzyme in the process to assimilate ammonia. When cellular nitrogen levels are high, the C-terminal adenylyl transferase (AT) inactivates GlnA by covalent transfer of an adenylyl group from ATP to specific tyrosine residue of GlnA, thus reducing its activity. Conversely, when nitrogen levels are low, the N-terminal adenylyl removase (AR) activates GlnA by removing the adenylyl group by phosphorolysis, increasing its activity. The regulatory region of GlnE binds the signal transduction protein PII (GlnB) which indicates the nitrogen status of the cell. The sequence is that of Bifunctional glutamine synthetase adenylyltransferase/adenylyl-removing enzyme from Brucella suis biovar 1 (strain 1330).